A 97-amino-acid chain; its full sequence is NELL2-interacting cell ontogeny regulator 1 (97 aa).

A signal peptide spans 1–35 (MAPLPPCGPPRSPPPRLLLLLLLLSATLLGAPARA).

It belongs to the NICOL family. Interacts with NELL2; triggers epididymal differentiation. Interacts with cell surface receptor TFRC; the interaction mediates uptake of NICOL1 into fibroblasts.

It localises to the secreted. The protein resides in the cytoplasm. Its subcellular location is the perinuclear region. MRNA-binding protein which interacts with a range of target mRNAs including SERPINE1, ACTA2, CCN2 and COL4A1 and may promote extracellular matrix production. Binds to the 3'-UTR of SERPINE1 mRNA and stabilizes the mRNA, possibly by competing for binding with SERBP1 and preventing SERBP1-mediated mRNA degradation. Also binds to the 3'-UTR of ACTA2. Testis-derived lumicrine factor that triggers epididymal differentiation and sperm maturation. The protein is NELL2-interacting cell ontogeny regulator 1 of Bos taurus (Bovine).